The chain runs to 306 residues: Porphobilinogen deaminase (306 aa).

Residue Cys239 is modified to S-(dipyrrolylmethanemethyl)cysteine.

The protein belongs to the HMBS family. Monomer. Requires dipyrromethane as cofactor.

It carries out the reaction 4 porphobilinogen + H2O = hydroxymethylbilane + 4 NH4(+). Its pathway is porphyrin-containing compound metabolism; protoporphyrin-IX biosynthesis; coproporphyrinogen-III from 5-aminolevulinate: step 2/4. Functionally, tetrapolymerization of the monopyrrole PBG into the hydroxymethylbilane pre-uroporphyrinogen in several discrete steps. The sequence is that of Porphobilinogen deaminase from Helicobacter acinonychis (strain Sheeba).